The following is a 72-amino-acid chain: SRY-related protein AES2 (72 aa).

Positions 1 to 69 (VKRPMNAFMV…KHMADYPDYK (69 aa)) form a DNA-binding region, HMG box.

It localises to the nucleus. The protein is SRY-related protein AES2 of Alligator mississippiensis (American alligator).